Here is a 78-residue protein sequence, read N- to C-terminus: Large ribosomal subunit protein bL28 (78 aa).

A disordered region spans residues 1 to 30; sequence MAAHCQVTGAGPGFGHSISHSHRRTKRRFD.

The protein belongs to the bacterial ribosomal protein bL28 family.

The polypeptide is Large ribosomal subunit protein bL28 (Micrococcus luteus (strain ATCC 4698 / DSM 20030 / JCM 1464 / CCM 169 / CCUG 5858 / IAM 1056 / NBRC 3333 / NCIMB 9278 / NCTC 2665 / VKM Ac-2230) (Micrococcus lysodeikticus)).